The sequence spans 126 residues: Acidic phospholipase A2 S1E6-a (126 aa).

Positions 1-3 (VEG) are cleaved as a signal peptide. Cystine bridges form between Cys29–Cys119, Cys31–Cys47, Cys46–Cys98, Cys52–Cys126, Cys53–Cys91, Cys60–Cys84, and Cys78–Cys89. Tyr30, Gly32, and Gly34 together coordinate Ca(2+). The active site involves His50. Residue Asp51 participates in Ca(2+) binding. Asp92 is an active-site residue.

In terms of assembly, homodimer. Ca(2+) is required as a cofactor. In terms of tissue distribution, expressed by the venom gland.

It localises to the secreted. It catalyses the reaction a 1,2-diacyl-sn-glycero-3-phosphocholine + H2O = a 1-acyl-sn-glycero-3-phosphocholine + a fatty acid + H(+). Snake venom phospholipase A2 (PLA2) that inhibits ADP-induced platelet aggregation. PLA2 catalyzes the calcium-dependent hydrolysis of the 2-acyl groups in 3-sn-phosphoglycerides. This is Acidic phospholipase A2 S1E6-a from Calloselasma rhodostoma (Malayan pit viper).